Here is a 22-residue protein sequence, read N- to C-terminus: Short-chain-enoyl-CoA hydratase (22 aa).

The protein belongs to the enoyl-CoA hydratase/isomerase family.

The catalysed reaction is a short-chain (3S)-3-hydroxyacyl-CoA = a short-chain (2E)-enoyl-CoA + H2O. It participates in lipid metabolism; butanoate metabolism. This is Short-chain-enoyl-CoA hydratase (crt) from Clostridium pasteurianum.